The following is a 228-amino-acid chain: 5'-methylthioadenosine/S-adenosylhomocysteine nucleosidase (228 aa).

The Proton acceptor role is filled by Glu-11. Substrate contacts are provided by residues Gly-77, Ile-151, and 172–173 (ME). Catalysis depends on Asp-196, which acts as the Proton donor.

Belongs to the PNP/UDP phosphorylase family. MtnN subfamily.

The catalysed reaction is S-adenosyl-L-homocysteine + H2O = S-(5-deoxy-D-ribos-5-yl)-L-homocysteine + adenine. The enzyme catalyses S-methyl-5'-thioadenosine + H2O = 5-(methylsulfanyl)-D-ribose + adenine. It catalyses the reaction 5'-deoxyadenosine + H2O = 5-deoxy-D-ribose + adenine. Its pathway is amino-acid biosynthesis; L-methionine biosynthesis via salvage pathway; S-methyl-5-thio-alpha-D-ribose 1-phosphate from S-methyl-5'-thioadenosine (hydrolase route): step 1/2. Functionally, catalyzes the irreversible cleavage of the glycosidic bond in both 5'-methylthioadenosine (MTA) and S-adenosylhomocysteine (SAH/AdoHcy) to adenine and the corresponding thioribose, 5'-methylthioribose and S-ribosylhomocysteine, respectively. Also cleaves 5'-deoxyadenosine, a toxic by-product of radical S-adenosylmethionine (SAM) enzymes, into 5-deoxyribose and adenine. This Staphylococcus aureus (strain MRSA252) protein is 5'-methylthioadenosine/S-adenosylhomocysteine nucleosidase.